The sequence spans 477 residues: Bifunctional protein HldE (477 aa).

Residues 1 to 318 (MKVTLPEFER…ENAVRGRADT (318 aa)) are ribokinase. Residue Lys-179 is modified to N6-acetyllysine. 195–198 (NLSE) is an ATP binding site. The active site involves Asp-264. The cytidylyltransferase stretch occupies residues 344 to 477 (MTNGVFDILH…IKKIQQDKKG (134 aa)).

It in the N-terminal section; belongs to the carbohydrate kinase PfkB family. This sequence in the C-terminal section; belongs to the cytidylyltransferase family. In terms of assembly, homodimer.

It catalyses the reaction D-glycero-beta-D-manno-heptose 7-phosphate + ATP = D-glycero-beta-D-manno-heptose 1,7-bisphosphate + ADP + H(+). The catalysed reaction is D-glycero-beta-D-manno-heptose 1-phosphate + ATP + H(+) = ADP-D-glycero-beta-D-manno-heptose + diphosphate. The protein operates within nucleotide-sugar biosynthesis; ADP-L-glycero-beta-D-manno-heptose biosynthesis; ADP-L-glycero-beta-D-manno-heptose from D-glycero-beta-D-manno-heptose 7-phosphate: step 1/4. It participates in nucleotide-sugar biosynthesis; ADP-L-glycero-beta-D-manno-heptose biosynthesis; ADP-L-glycero-beta-D-manno-heptose from D-glycero-beta-D-manno-heptose 7-phosphate: step 3/4. Its function is as follows. Catalyzes the phosphorylation of D-glycero-D-manno-heptose 7-phosphate at the C-1 position to selectively form D-glycero-beta-D-manno-heptose-1,7-bisphosphate. Catalyzes the ADP transfer from ATP to D-glycero-beta-D-manno-heptose 1-phosphate, yielding ADP-D-glycero-beta-D-manno-heptose. The sequence is that of Bifunctional protein HldE from Shigella sonnei (strain Ss046).